Here is a 341-residue protein sequence, read N- to C-terminus: L-threonine 3-dehydrogenase (341 aa).

Cys38 is a binding site for Zn(2+). Catalysis depends on charge relay system residues Thr40 and His43. Positions 63, 64, 93, 96, 99, and 107 each coordinate Zn(2+). Residues Ile175, Asp195, Arg200, 262–264 (LGI), and 286–287 (IY) contribute to the NAD(+) site.

It belongs to the zinc-containing alcohol dehydrogenase family. In terms of assembly, homotetramer. Zn(2+) is required as a cofactor.

It localises to the cytoplasm. The catalysed reaction is L-threonine + NAD(+) = (2S)-2-amino-3-oxobutanoate + NADH + H(+). Its pathway is amino-acid degradation; L-threonine degradation via oxydo-reductase pathway; glycine from L-threonine: step 1/2. Functionally, catalyzes the NAD(+)-dependent oxidation of L-threonine to 2-amino-3-ketobutyrate. The polypeptide is L-threonine 3-dehydrogenase (Shewanella putrefaciens (strain CN-32 / ATCC BAA-453)).